Here is a 407-residue protein sequence, read N- to C-terminus: Phosphopentomutase (407 aa).

Mn(2+) contacts are provided by Asp10, Asp306, His311, Asp347, His348, and His359.

It belongs to the phosphopentomutase family. Mn(2+) serves as cofactor.

Its subcellular location is the cytoplasm. It catalyses the reaction 2-deoxy-alpha-D-ribose 1-phosphate = 2-deoxy-D-ribose 5-phosphate. It carries out the reaction alpha-D-ribose 1-phosphate = D-ribose 5-phosphate. It functions in the pathway carbohydrate degradation; 2-deoxy-D-ribose 1-phosphate degradation; D-glyceraldehyde 3-phosphate and acetaldehyde from 2-deoxy-alpha-D-ribose 1-phosphate: step 1/2. Its function is as follows. Isomerase that catalyzes the conversion of deoxy-ribose 1-phosphate (dRib-1-P) and ribose 1-phosphate (Rib-1-P) to deoxy-ribose 5-phosphate (dRib-5-P) and ribose 5-phosphate (Rib-5-P), respectively. The protein is Phosphopentomutase of Serratia proteamaculans (strain 568).